We begin with the raw amino-acid sequence, 176 residues long: Putative phosphohydrolase YueE (176 aa).

The HD domain occupies glycine 23–glutamate 139.

The polypeptide is Putative phosphohydrolase YueE (yueE) (Bacillus subtilis (strain 168)).